The primary structure comprises 453 residues: Gamma-aminobutyric acid receptor subunit alpha-6 (453 aa).

A signal peptide spans M1–A19. The Extracellular portion of the chain corresponds to Q20–F243. Residue N31 is glycosylated (N-linked (GlcNAc...) asparagine). R84 is a 4-aminobutanoate binding site. N-linked (GlcNAc...) asparagine glycosylation is found at N128 and N141. T147 serves as a coordination point for 4-aminobutanoate. The cysteines at positions 156 and 170 are disulfide-linked. Residues M244–I264 form a helical membrane-spanning segment. Topologically, residues N265–P270 are cytoplasmic. The chain crosses the membrane as a helical span at residues A271–A290. At R291 to D304 the chain is on the extracellular side. Residues W305–N325 form a helical membrane-spanning segment. At Y326–R422 the chain is on the cytoplasmic side. Position 375 is a phosphoserine (S375). Residues I423–K443 form a helical membrane-spanning segment. Residues D444–E453 are Extracellular-facing.

The protein belongs to the ligand-gated ion channel (TC 1.A.9) family. Gamma-aminobutyric acid receptor (TC 1.A.9.5) subfamily. GABRA6 sub-subfamily. As to quaternary structure, heteropentamer, formed by a combination of alpha (GABRA1-6), beta (GABRB1-3), gamma (GABRG1-3), delta (GABRD), epsilon (GABRE), rho (GABRR1-3), pi (GABRP) and theta (GABRQ) chains, each subunit exhibiting distinct physiological and pharmacological properties. Binds UBQLN1. In terms of tissue distribution, expressed in brain, in cerebellar granule cells.

The protein localises to the postsynaptic cell membrane. It is found in the cell membrane. The catalysed reaction is chloride(in) = chloride(out). Alpha subunit of the heteropentameric ligand-gated chloride channel gated by gamma-aminobutyric acid (GABA), a major inhibitory neurotransmitter in the brain. GABA-gated chloride channels, also named GABA(A) receptors (GABAAR), consist of five subunits arranged around a central pore and contain GABA active binding site(s) located at the alpha and beta subunit interface(s). When activated by GABA, GABAARs selectively allow the flow of chloride anions across the cell membrane down their electrochemical gradient. Alpha-6/GABRA6 subunits are found at both synaptic and extrasynaptic sites. Chloride influx into the postsynaptic neuron following GABAAR opening decreases the neuron ability to generate a new action potential, thereby reducing nerve transmission. Extrasynaptic alpha-6-containing receptors contribute to the tonic GABAergic inhibition. Alpha-6 subunits are also present on glutamatergic synapses. This chain is Gamma-aminobutyric acid receptor subunit alpha-6, found in Mus musculus (Mouse).